The chain runs to 583 residues: Thiol:disulfide interchange protein DsbD (583 aa).

Positions 1–20 (MLKRFIFLLVGITLTLSAHA) are cleaved as a signal peptide. 2 disulfide bridges follow: Cys123–Cys128 and Cys200–Cys322. 8 helical membrane passes run 185-205 (IFWF…LPML), 237-257 (LTYT…QVAL), 261-281 (PVLI…FGLF), 302-322 (GGAF…ASPC), 344-364 (GLAL…ITLF), 375-395 (WLLK…VFLL), 405-425 (PLMW…VIPT), and 433-453 (VRIV…NLVW). The 144-residue stretch at 440 to 583 (TFAVASYPWA…NQFLNWLNQL (144 aa)) folds into the Thioredoxin domain. Residues Cys500 and Cys503 are joined by a disulfide bond.

Belongs to the thioredoxin family. DsbD subfamily.

Its subcellular location is the cell inner membrane. It carries out the reaction [protein]-dithiol + NAD(+) = [protein]-disulfide + NADH + H(+). The catalysed reaction is [protein]-dithiol + NADP(+) = [protein]-disulfide + NADPH + H(+). In terms of biological role, required to facilitate the formation of correct disulfide bonds in some periplasmic proteins and for the assembly of the periplasmic c-type cytochromes. Acts by transferring electrons from cytoplasmic thioredoxin to the periplasm. This transfer involves a cascade of disulfide bond formation and reduction steps. The sequence is that of Thiol:disulfide interchange protein DsbD from Actinobacillus pleuropneumoniae serotype 5b (strain L20).